Reading from the N-terminus, the 248-residue chain is Triosephosphate isomerase (248 aa).

9–11 (NWK) is a substrate binding site. The active-site Electrophile is the histidine 94. Glutamate 166 serves as the catalytic Proton acceptor. Residues glycine 172, serine 212, and 233 to 234 (GG) each bind substrate.

This sequence belongs to the triosephosphate isomerase family. Homodimer.

The protein resides in the cytoplasm. It catalyses the reaction D-glyceraldehyde 3-phosphate = dihydroxyacetone phosphate. The protein operates within carbohydrate biosynthesis; gluconeogenesis. It functions in the pathway carbohydrate degradation; glycolysis; D-glyceraldehyde 3-phosphate from glycerone phosphate: step 1/1. Functionally, involved in the gluconeogenesis. Catalyzes stereospecifically the conversion of dihydroxyacetone phosphate (DHAP) to D-glyceraldehyde-3-phosphate (G3P). This chain is Triosephosphate isomerase, found in Clostridium botulinum (strain Loch Maree / Type A3).